Consider the following 368-residue polypeptide: Chorismate synthase (368 aa).

NADP(+) is bound by residues R48 and R54. Residues 125–127, 238–239, G278, 293–297, and R319 contribute to the FMN site; these read RSS, NA, and KPTSS.

This sequence belongs to the chorismate synthase family. In terms of assembly, homotetramer. FMNH2 is required as a cofactor.

The enzyme catalyses 5-O-(1-carboxyvinyl)-3-phosphoshikimate = chorismate + phosphate. Its pathway is metabolic intermediate biosynthesis; chorismate biosynthesis; chorismate from D-erythrose 4-phosphate and phosphoenolpyruvate: step 7/7. Catalyzes the anti-1,4-elimination of the C-3 phosphate and the C-6 proR hydrogen from 5-enolpyruvylshikimate-3-phosphate (EPSP) to yield chorismate, which is the branch point compound that serves as the starting substrate for the three terminal pathways of aromatic amino acid biosynthesis. This reaction introduces a second double bond into the aromatic ring system. The polypeptide is Chorismate synthase (Methylibium petroleiphilum (strain ATCC BAA-1232 / LMG 22953 / PM1)).